Here is a 397-residue protein sequence, read N- to C-terminus: ATP-dependent RNA helicase eIF4A (397 aa).

The short motif at 24–52 is the Q motif element; it reads DSFDDMNLKSELLRGIYAYGFERPSAIQQ. Residues 55–225 enclose the Helicase ATP-binding domain; it reads IMPVIKGHDV…TKFMRDPVRI (171 aa). 68 to 75 contributes to the ATP binding site; that stretch reads AQSGTGKT. A DEAD box motif is present at residues 173–176; it reads DEAD. In terms of domain architecture, Helicase C-terminal spans 236-397; sequence GIKQFYIAVE…EMPMNVADLI (162 aa).

Belongs to the DEAD box helicase family. eIF4A subfamily. As to quaternary structure, component of the eIF4F complex, which composition varies with external and internal environmental conditions. It is composed of at least eIF4A, eIF4E and eIF4G.

Its subcellular location is the cytoplasm. The enzyme catalyses ATP + H2O = ADP + phosphate + H(+). ATP-dependent RNA helicase which is a subunit of the eIF4F complex involved in cap recognition and is required for mRNA binding to ribosome. In the current model of translation initiation, eIF4A unwinds RNA secondary structures in the 5'-UTR of mRNAs which is necessary to allow efficient binding of the small ribosomal subunit, and subsequent scanning for the initiator codon. The chain is ATP-dependent RNA helicase eIF4A (TIF1) from Chaetomium globosum (strain ATCC 6205 / CBS 148.51 / DSM 1962 / NBRC 6347 / NRRL 1970) (Soil fungus).